Here is a 376-residue protein sequence, read N- to C-terminus: Queuine tRNA-ribosyltransferase (376 aa).

The active-site Proton acceptor is the aspartate 89. Substrate is bound by residues 89–93, aspartate 143, glutamine 194, and glycine 221; that span reads DSGGF. Residues 252–258 are RNA binding; the sequence is GVGTPSN. Aspartate 271 (nucleophile) is an active-site residue. Positions 276 to 280 are RNA binding; important for wobble base 34 recognition; the sequence is ARNGR. Residues cysteine 309, cysteine 311, cysteine 314, and histidine 340 each contribute to the Zn(2+) site.

Belongs to the queuine tRNA-ribosyltransferase family. In terms of assembly, homodimer. Within each dimer, one monomer is responsible for RNA recognition and catalysis, while the other monomer binds to the replacement base PreQ1. Requires Zn(2+) as cofactor.

The enzyme catalyses 7-aminomethyl-7-carbaguanine + guanosine(34) in tRNA = 7-aminomethyl-7-carbaguanosine(34) in tRNA + guanine. It participates in tRNA modification; tRNA-queuosine biosynthesis. Catalyzes the base-exchange of a guanine (G) residue with the queuine precursor 7-aminomethyl-7-deazaguanine (PreQ1) at position 34 (anticodon wobble position) in tRNAs with GU(N) anticodons (tRNA-Asp, -Asn, -His and -Tyr). Catalysis occurs through a double-displacement mechanism. The nucleophile active site attacks the C1' of nucleotide 34 to detach the guanine base from the RNA, forming a covalent enzyme-RNA intermediate. The proton acceptor active site deprotonates the incoming PreQ1, allowing a nucleophilic attack on the C1' of the ribose to form the product. After dissociation, two additional enzymatic reactions on the tRNA convert PreQ1 to queuine (Q), resulting in the hypermodified nucleoside queuosine (7-(((4,5-cis-dihydroxy-2-cyclopenten-1-yl)amino)methyl)-7-deazaguanosine). This chain is Queuine tRNA-ribosyltransferase, found in Clostridium acetobutylicum (strain ATCC 824 / DSM 792 / JCM 1419 / IAM 19013 / LMG 5710 / NBRC 13948 / NRRL B-527 / VKM B-1787 / 2291 / W).